Reading from the N-terminus, the 205-residue chain is Glycerol-3-phosphate acyltransferase (205 aa).

6 helical membrane-spanning segments follow: residues Leu5 to Ala25, Ile56 to Leu76, Val84 to Phe104, Ile114 to Leu134, Leu144 to Phe164, and His165 to His185.

The protein belongs to the PlsY family. In terms of assembly, probably interacts with PlsX.

Its subcellular location is the cell membrane. It carries out the reaction an acyl phosphate + sn-glycerol 3-phosphate = a 1-acyl-sn-glycero-3-phosphate + phosphate. It functions in the pathway lipid metabolism; phospholipid metabolism. Its function is as follows. Catalyzes the transfer of an acyl group from acyl-phosphate (acyl-PO(4)) to glycerol-3-phosphate (G3P) to form lysophosphatidic acid (LPA). This enzyme utilizes acyl-phosphate as fatty acyl donor, but not acyl-CoA or acyl-ACP. In Shouchella clausii (strain KSM-K16) (Alkalihalobacillus clausii), this protein is Glycerol-3-phosphate acyltransferase.